Reading from the N-terminus, the 573-residue chain is DNA ligase (573 aa).

Glu-250 is an ATP binding site. The active-site N6-AMP-lysine intermediate is the Lys-252. ATP is bound by residues Arg-257, Arg-272, Glu-301, Phe-342, Arg-432, and Lys-438.

The protein belongs to the ATP-dependent DNA ligase family. Mg(2+) serves as cofactor.

The catalysed reaction is ATP + (deoxyribonucleotide)n-3'-hydroxyl + 5'-phospho-(deoxyribonucleotide)m = (deoxyribonucleotide)n+m + AMP + diphosphate.. Its function is as follows. DNA ligase that seals nicks in double-stranded DNA during DNA replication, DNA recombination and DNA repair. This Methanococcus maripaludis (strain C6 / ATCC BAA-1332) protein is DNA ligase.